A 262-amino-acid chain; its full sequence is Large ribosomal subunit protein uL10m (262 aa).

Residues 1-28 (MAAAVAGILRGGLPPRAAWLPTLQTVRH) constitute a mitochondrion transit peptide. The tract at residues 243 to 262 (GDCATSANEKLHPPDPAPDA) is disordered.

It belongs to the universal ribosomal protein uL10 family. In terms of assembly, component of the mitochondrial ribosome large subunit (39S) which comprises a 16S rRNA and about 50 distinct proteins.

It localises to the mitochondrion. This is Large ribosomal subunit protein uL10m (Mrpl10) from Mus musculus (Mouse).